The chain runs to 184 residues: Protein Iojap-related, mitochondrial (184 aa).

A mitochondrion-targeting transit peptide spans 1 to 39 (MLTTLRSRCSSLLLNQSWKLAPNRIFASSPSFSSSAGIS).

This sequence belongs to the Iojap/RsfS family.

The protein resides in the mitochondrion. Its function is as follows. May be a ribosome silencing factor involved in organelle biogenesis and required for germination. The chain is Protein Iojap-related, mitochondrial from Arabidopsis thaliana (Mouse-ear cress).